The chain runs to 100 residues: Guanine nucleotide exchange factor MSS4 homolog (100 aa).

Residues 1 to 100 (MSNLRIVCQH…YLLLCSLEKN (100 aa)) form the MSS4 domain. Positions 8, 11, 73, and 76 each coordinate Zn(2+).

Belongs to the DSS4/MSS4 family.

Guanine-nucleotide-releasing protein that acts on members of the sec4/ypt1/rab subfamily. The protein is Guanine nucleotide exchange factor MSS4 homolog of Schizosaccharomyces pombe (strain 972 / ATCC 24843) (Fission yeast).